Here is a 312-residue protein sequence, read N- to C-terminus: Calcium-independent mitochondrial carrier protein SCaMC-3L (312 aa).

Solcar repeat units follow at residues Gly-27–Phe-113, Gln-121–Leu-206, and Pro-217–Thr-304. The next 6 membrane-spanning stretches (helical) occupy residues Leu-33–Leu-50, Gly-88–Cys-107, Ser-131–Met-144, Tyr-182–Tyr-200, Gly-219–Val-243, and Gly-279–Tyr-298.

This sequence belongs to the mitochondrial carrier (TC 2.A.29) family. Mainly expressed in testis and at lesser levels in brain.

The protein resides in the mitochondrion inner membrane. It carries out the reaction Mg(2+)(out) + phosphate(in) + ATP(out) = Mg(2+)(in) + phosphate(out) + ATP(in). It catalyses the reaction ADP(out) + phosphate(in) + H(+)(out) = ADP(in) + phosphate(out) + H(+)(in). In terms of biological role, calcium-independent ATP-Mg/Pi exchanger that catalyzes the electroneutral exchange of Mg-ATP or free ADP against an hydrogenphosphate and participates in the net transport of adenine nucleotides across the mitochondria inner membrane. The polypeptide is Calcium-independent mitochondrial carrier protein SCaMC-3L (Mus musculus (Mouse)).